The primary structure comprises 223 residues: Deoxyribose-phosphate aldolase (223 aa).

Asp89 acts as the Proton donor/acceptor in catalysis. Catalysis depends on Lys152, which acts as the Schiff-base intermediate with acetaldehyde. The Proton donor/acceptor role is filled by Lys181.

Belongs to the DeoC/FbaB aldolase family. DeoC type 1 subfamily.

The protein resides in the cytoplasm. The catalysed reaction is 2-deoxy-D-ribose 5-phosphate = D-glyceraldehyde 3-phosphate + acetaldehyde. The protein operates within carbohydrate degradation; 2-deoxy-D-ribose 1-phosphate degradation; D-glyceraldehyde 3-phosphate and acetaldehyde from 2-deoxy-alpha-D-ribose 1-phosphate: step 2/2. In terms of biological role, catalyzes a reversible aldol reaction between acetaldehyde and D-glyceraldehyde 3-phosphate to generate 2-deoxy-D-ribose 5-phosphate. This Bacillus cereus (strain ATCC 10987 / NRS 248) protein is Deoxyribose-phosphate aldolase.